The primary structure comprises 334 residues: Holliday junction branch migration complex subunit RuvB (334 aa).

Residues 1-182 (MNERMVDQSM…FGVHLRLEYY (182 aa)) form a large ATPase domain (RuvB-L) region. ATP-binding positions include L21, R22, G63, K66, T67, T68, 129 to 131 (EDF), R172, Y182, and R219. Residue T67 participates in Mg(2+) binding. Residues 183 to 253 (NESDLKEIII…TTKHALGLLQ (71 aa)) are small ATPAse domain (RuvB-S). The segment at 256 to 334 (QHGLDYIDHK…HFAKSNEERE (79 aa)) is head domain (RuvB-H). DNA contacts are provided by R292, R311, and R316.

This sequence belongs to the RuvB family. In terms of assembly, homohexamer. Forms an RuvA(8)-RuvB(12)-Holliday junction (HJ) complex. HJ DNA is sandwiched between 2 RuvA tetramers; dsDNA enters through RuvA and exits via RuvB. An RuvB hexamer assembles on each DNA strand where it exits the tetramer. Each RuvB hexamer is contacted by two RuvA subunits (via domain III) on 2 adjacent RuvB subunits; this complex drives branch migration. In the full resolvosome a probable DNA-RuvA(4)-RuvB(12)-RuvC(2) complex forms which resolves the HJ.

The protein resides in the cytoplasm. The enzyme catalyses ATP + H2O = ADP + phosphate + H(+). Functionally, the RuvA-RuvB-RuvC complex processes Holliday junction (HJ) DNA during genetic recombination and DNA repair, while the RuvA-RuvB complex plays an important role in the rescue of blocked DNA replication forks via replication fork reversal (RFR). RuvA specifically binds to HJ cruciform DNA, conferring on it an open structure. The RuvB hexamer acts as an ATP-dependent pump, pulling dsDNA into and through the RuvAB complex. RuvB forms 2 homohexamers on either side of HJ DNA bound by 1 or 2 RuvA tetramers; 4 subunits per hexamer contact DNA at a time. Coordinated motions by a converter formed by DNA-disengaged RuvB subunits stimulates ATP hydrolysis and nucleotide exchange. Immobilization of the converter enables RuvB to convert the ATP-contained energy into a lever motion, pulling 2 nucleotides of DNA out of the RuvA tetramer per ATP hydrolyzed, thus driving DNA branch migration. The RuvB motors rotate together with the DNA substrate, which together with the progressing nucleotide cycle form the mechanistic basis for DNA recombination by continuous HJ branch migration. Branch migration allows RuvC to scan DNA until it finds its consensus sequence, where it cleaves and resolves cruciform DNA. This is Holliday junction branch migration complex subunit RuvB from Staphylococcus aureus (strain MRSA252).